The following is a 371-amino-acid chain: MYNESPIIRRPSTRIYVGDVPIGDGAPIAVQSMTNTRTTDVEATVAQIRALENVGADIVRVSVPTMDAAEAFKVIKQQTKVPLVADIHFDYRIALKVAEYGVDCLRINPGNIGNEERIRSVVECARDKNIPIRIGVNGGSLEKDLMDKYKEPTPQALLESAMRHVDILDRLNFDQFKVSVKASDVFLAVESYRLLAKQIKQPLHLGITEAGGARAGAVKSAVGLGMLLAEGIGDTLRISLAADPVEEIKVGFDILKSLRIRSRGINFIACPSCSRQEFDVIATVNELERRLEDVVTPMDVSIIGCVVNGPGEALVSDIGLTGGNRKSGYYDDGVRQKERFDNEHIVDQLEAKIRAKVASVDARIPTTDITE.

Cys-270, Cys-273, Cys-305, and Glu-312 together coordinate [4Fe-4S] cluster.

It belongs to the IspG family. [4Fe-4S] cluster serves as cofactor.

It carries out the reaction (2E)-4-hydroxy-3-methylbut-2-enyl diphosphate + oxidized [flavodoxin] + H2O + 2 H(+) = 2-C-methyl-D-erythritol 2,4-cyclic diphosphate + reduced [flavodoxin]. It participates in isoprenoid biosynthesis; isopentenyl diphosphate biosynthesis via DXP pathway; isopentenyl diphosphate from 1-deoxy-D-xylulose 5-phosphate: step 5/6. In terms of biological role, converts 2C-methyl-D-erythritol 2,4-cyclodiphosphate (ME-2,4cPP) into 1-hydroxy-2-methyl-2-(E)-butenyl 4-diphosphate. This is 4-hydroxy-3-methylbut-2-en-1-yl diphosphate synthase (flavodoxin) from Shewanella loihica (strain ATCC BAA-1088 / PV-4).